A 223-amino-acid polypeptide reads, in one-letter code: Small ribosomal subunit protein uS3 (223 aa).

One can recognise a KH type-2 domain in the interval 39–107 (VREFLKQKLK…PVQVSVEEIR (69 aa)).

The protein belongs to the universal ribosomal protein uS3 family. Part of the 30S ribosomal subunit. Forms a tight complex with proteins S10 and S14.

Binds the lower part of the 30S subunit head. Binds mRNA in the 70S ribosome, positioning it for translation. In Methylococcus capsulatus (strain ATCC 33009 / NCIMB 11132 / Bath), this protein is Small ribosomal subunit protein uS3.